We begin with the raw amino-acid sequence, 447 residues long: Clusterin (447 aa).

A signal peptide spans 1-22; that stretch reads MKTLLLCVGLLLSWERGQVLGD. Positions 77-80 match the Nuclear localization signal motif; that stretch reads KKNK. N-linked (GlcNAc...) asparagine glycosylation is found at Asn85 and Asn102. Intrachain disulfides connect Cys101/Cys311, Cys112/Cys303, Cys115/Cys300, Cys120/Cys293, and Cys128/Cys283. At Ser132 the chain carries Phosphoserine. Asn144, Asn289, Asn326, Asn352, and Asn372 each carry an N-linked (GlcNAc...) asparagine glycan. At Ser394 the chain carries Phosphoserine. Residues 441-445 carry the Nuclear localization signal motif; it reads RKKKR.

This sequence belongs to the clusterin family. In terms of assembly, antiparallel disulfide-linked heterodimer of an alpha chain and a beta chain. Self-associates and forms higher oligomers. Interacts with a broad range of misfolded proteins, including APP, APOC2 and LYZ. Slightly acidic pH promotes interaction with misfolded proteins. Forms high-molecular weight oligomers upon interaction with misfolded proteins. Interacts with APOA1, LRP2, CLUAP1 and PON1. Interacts with the complement membrane attack complex. Interacts (via alpha chain) with XRCC6. Interacts with SYVN1, COMMD1, BTRC, CUL1 and with ubiquitin and SCF (SKP1-CUL1-F-box protein) E3 ubiquitin-protein ligase complexes. Interacts (via alpha chain) with BAX in stressed cells, where BAX undergoes a conformation change leading to association with the mitochondrial membrane. Does not interact with BAX in unstressed cells. Found in a complex with LTF, CLU, EPPIN and SEMG1. Interacts (immaturely glycosylated pre-secreted form) with HSPA5; this interaction promotes CLU stability and facilitates stress-induced CLU retrotranslocation from the secretory pathway to the mitochondria, thereby reducing stress-induced apoptosis by stabilizing mitochondrial membrane integrity. Interacts with BCL2L1; this interaction releases and activates BAX and promotes cell death. Interacts with TGFBR2 and ACVR1. Interacts (secreted form) with STMN3; this interaction may act as an important modulator during neuronal differentiation. Interacts with VLDLR and LRP8. Proteolytically cleaved on its way through the secretory system, probably within the Golgi lumen. Proteolytic cleavage is not necessary for its chaperone activity. All non-secreted forms are not proteolytically cleaved. Chaperone activity of uncleaved forms is dependent on a non-reducing environment. In terms of processing, polyubiquitinated, leading to proteasomal degradation. Under cellular stress, the intracellular level of cleaved form is reduced due to proteasomal degradation. Post-translationally, heavily N-glycosylated. About 30% of the protein mass is comprised of complex N-linked carbohydrate. Endoplasmic reticulum (ER) stress induces changes in glycosylation status and increases level of hypoglycosylated forms. Core carbohydrates are essential for chaperone activity. Non-secreted forms are hypoglycosylated or unglycosylated.

The protein localises to the secreted. It is found in the nucleus. The protein resides in the cytoplasm. It localises to the mitochondrion membrane. Its subcellular location is the cytosol. The protein localises to the microsome. It is found in the endoplasmic reticulum. The protein resides in the mitochondrion. It localises to the perinuclear region. Its subcellular location is the cytoplasmic vesicle. The protein localises to the secretory vesicle. It is found in the chromaffin granule. Functionally, functions as extracellular chaperone that prevents aggregation of non native proteins. Prevents stress-induced aggregation of blood plasma proteins. Inhibits formation of amyloid fibrils by APP, APOC2, B2M, CALCA, CSN3, SNCA and aggregation-prone LYZ variants (in vitro). Does not require ATP. Maintains partially unfolded proteins in a state appropriate for subsequent refolding by other chaperones, such as HSPA8/HSC70. Does not refold proteins by itself. Binding to cell surface receptors triggers internalization of the chaperone-client complex and subsequent lysosomal or proteasomal degradation. When secreted, protects cells against apoptosis and against cytolysis by complement: inhibits assembly of the complement membrane attack complex (MAC) by preventing polymerization of C9 pore component of the MAC complex. Intracellular forms interact with ubiquitin and SCF (SKP1-CUL1-F-box protein) E3 ubiquitin-protein ligase complexes and promote the ubiquitination and subsequent proteasomal degradation of target proteins. Promotes proteasomal degradation of COMMD1 and IKBKB. Modulates NF-kappa-B transcriptional activity. Following stress, promotes apoptosis. Inhibits apoptosis when associated with the mitochondrial membrane by interference with BAX-dependent release of cytochrome c into the cytoplasm. Plays a role in the regulation of cell proliferation. An intracellular form suppresses stress-induced apoptosis by stabilizing mitochondrial membrane integrity through interaction with HSPA5. Secreted form does not affect caspase or BAX-mediated intrinsic apoptosis and TNF-induced NF-kappa-B-activity. Secreted form act as an important modulator during neuronal differentiation through interaction with STMN3. Plays a role in the clearance of immune complexes that arise during cell injury. This Oryctolagus cuniculus (Rabbit) protein is Clusterin (CLU).